The following is a 145-amino-acid chain: Small ribosomal subunit protein uS12 (145 aa).

Belongs to the universal ribosomal protein uS12 family. Part of the 30S ribosomal subunit.

Functionally, with S4 and S5 plays an important role in translational accuracy. Located at the interface of the 30S and 50S subunits. The sequence is that of Small ribosomal subunit protein uS12 from Cenarchaeum symbiosum (strain A).